A 702-amino-acid chain; its full sequence is Polyribonucleotide nucleotidyltransferase (702 aa).

D485 and D491 together coordinate Mg(2+). Residues 552–611 enclose the KH domain; sequence PRITTLKINPEKIRDVIGKGGATIRALTEETGTTIELEDDGTVKIASANGEATKEAIRRI. In terms of domain architecture, S1 motif spans 621–689; it reads GTVYNGKVVR…RQGRVRLSMK (69 aa).

Belongs to the polyribonucleotide nucleotidyltransferase family. As to quaternary structure, component of the RNA degradosome, which is a multiprotein complex involved in RNA processing and mRNA degradation. The cofactor is Mg(2+).

It is found in the cytoplasm. It catalyses the reaction RNA(n+1) + phosphate = RNA(n) + a ribonucleoside 5'-diphosphate. Involved in mRNA degradation. Catalyzes the phosphorolysis of single-stranded polyribonucleotides processively in the 3'- to 5'-direction. This chain is Polyribonucleotide nucleotidyltransferase, found in Shewanella woodyi (strain ATCC 51908 / MS32).